We begin with the raw amino-acid sequence, 1334 residues long: Adenylate cyclase type 9 (1334 aa).

2 disordered regions span residues 1-28 (MASPPHQQLLHHHSTEVSCDSSGDSNSV) and 49-71 (ISSSCSSGESGGVGRGGGGGLRR). Over 1–113 (MASPPHQQLL…CFPQTQRRFR (113 aa)) the chain is Cytoplasmic. Residues 16-28 (EVSCDSSGDSNSV) are compositionally biased toward polar residues. Residues 57-69 (ESGGVGRGGGGGL) are compositionally biased toward gly residues. Residues 114–134 (YALFYIGSACLLWGIYFGVHM) form a helical membrane-spanning segment. The Extracellular portion of the chain corresponds to 135–137 (REK). A helical transmembrane segment spans residues 138–158 (QMVFMVPALCFLLVCVAFFAF). Residues 159 to 167 (TFTKAYARR) lie on the Cytoplasmic side of the membrane. Residues 168–187 (YVWTSGYTLLVFALTLAPQF) traverse the membrane as a helical segment. Topologically, residues 188–207 (QPWTLGERQRVQPRPAAPVD) are extracellular. The helical transmembrane segment at 208–227 (TCLSQVGSFSMCVEVLLLLY) threads the bilayer. Residues 228–233 (TVMHLP) lie on the Cytoplasmic side of the membrane. A helical membrane pass occupies residues 234–250 (LYLSLFLGLSYSVLFET). Topologically, residues 251 to 269 (SAFRDESCTLLGGGAVYWE) are extracellular. A helical membrane pass occupies residues 270 to 290 (LLSKAFLHVCIHAIGIHLFIM). Over 291–768 (SEVRSRSTFL…VKTFASATFS (478 aa)) the chain is Cytoplasmic. The segment at 338-363 (QGDDESENSVKRHSTSSPKNRKKKPS) is disordered. The span at 348 to 363 (KRHSTSSPKNRKKKPS) shows a compositional bias: basic residues. 3 residues coordinate Mg(2+): Asp388, Ile389, and Asp432. ATP contacts are provided by residues 388–393 (DIVGFT), 430–432 (LGD), and Arg476. The disordered stretch occupies residues 635–670 (GCQDEHKNSTKAPGGHSPKTQNGLLSPPQEEKLSNS). Residues 769–789 (SLLDVFLSTTVFLILSVTCFL) form a helical membrane-spanning segment. At 790–800 (KHGMVASPPPP) the chain is on the extracellular side. The helical transmembrane segment at 801–821 (AAVVVFVIAILLEVLSLVISV) threads the bilayer. Over 822-849 (RMVFFLEEVMACTKRLLELISGWLPRHF) the chain is Cytoplasmic. Residues 850–870 (LGAILVSLPALAVFSHFTSDF) form a helical membrane-spanning segment. At 871 to 873 (ETN) the chain is on the extracellular side. The helical transmembrane segment at 874–894 (IHYTMFMCCAILIAIVQYCNF) threads the bilayer. Residues 895–902 (CQLSSWMR) are Cytoplasmic-facing. A helical membrane pass occupies residues 903–923 (SLLATVVGAVLLILLYVSLCP). Residues 924 to 957 (DSSVETLHLDLAQNLSSRKSPCNSSMPADVKRPA) lie on the Extracellular side of the membrane. 2 N-linked (GlcNAc...) asparagine glycosylation sites follow: Asn937 and Asn946. A helical membrane pass occupies residues 958-978 (DLIGQEVILAVFLLLLLVWFL). The Cytoplasmic segment spans residues 979 to 1334 (NRSFEVSYRL…LTKLNVSKSV (356 aa)). ATP-binding positions include Lys1090, 1167 to 1169 (DIW), 1174 to 1178 (NIASR), and Lys1214. The disordered stretch occupies residues 1266 to 1303 (SVQNSDKTAHATDNSETKDALPSSKKLQKEPTKAEERC). Composition is skewed to basic and acidic residues over residues 1272-1284 (KTAHATDNSETKD) and 1292-1303 (LQKEPTKAEERC).

It belongs to the adenylyl cyclase class-4/guanylyl cyclase family. It depends on Mg(2+) as a cofactor. Mn(2+) serves as cofactor. As to expression, detected in embryonic heart (at protein level).

The protein resides in the cell membrane. It localises to the membrane. It catalyses the reaction ATP = 3',5'-cyclic AMP + diphosphate. Insensitive to calcium/calmodulin, forskolin and somatostatin. Stimulated by beta-adrenergic receptor activation. Activity is down-regulated by calcium/calcineurin. Adenylyl cyclase that catalyzes the formation of the signaling molecule cAMP in response to activation of G protein-coupled receptors. This chain is Adenylate cyclase type 9 (ADCY9), found in Gallus gallus (Chicken).